Reading from the N-terminus, the 463-residue chain is MAKDMDTIVSLAKHRGFVFPGSDIYGGLSNTWDYGPLGVELKNNVKKAWWQKFITQSPFNVGIDAAILMNPKVWEASGHLNNFNDPMIDNKDSKIRYRADKLIEDYMQDVKGDENFIADGLSFEQMKKIIDDEGIVCPVSKTANWTEIRQFNLMFKTFQGVTEDSTNEIFLRPETAQGIFVNYKNVQRSMRKKLPFGIGQIGKSFRNEITPGNFIFRTREFEQMELEFFCKPGEEIEWQNYWKTFASDWLTSLNMSSENMRLRDHDEDELSHYSNATTDIEYKFPFGWGELWGIASRTDFDLRKHAEHSGEDFRYHDPETNEKYIPYCIEPSLGADRVTLAFLCDAYDEEGVEGSKDARTVLHFHPALAPYKAAILPLSKKLSGEAIKIFEQLSSKFSIDFDESQSIGKRYRRQDEIGTPYCVTFDFDSLEDNQVTVRDRDSMEQVRMPISELEAFLTEKTKF.

The substrate site is built by Arg98 and Glu174. ATP contacts are provided by residues 206–208, 216–221, 290–291, and 334–337; these read RNE, FRTREF, EL, and GADR. 221-225 serves as a coordination point for substrate; the sequence is FEQME. 330 to 334 serves as a coordination point for substrate; it reads EPSLG.

It belongs to the class-II aminoacyl-tRNA synthetase family. As to quaternary structure, homodimer.

Its subcellular location is the cytoplasm. It catalyses the reaction tRNA(Gly) + glycine + ATP = glycyl-tRNA(Gly) + AMP + diphosphate. Its function is as follows. Catalyzes the attachment of glycine to tRNA(Gly). The protein is Glycine--tRNA ligase of Staphylococcus aureus (strain Mu50 / ATCC 700699).